We begin with the raw amino-acid sequence, 245 residues long: Pathogenesis-related thaumatin-like protein 3.6 (245 aa).

An N-terminal signal peptide occupies residues G1–G19. 8 cysteine pairs are disulfide-bonded: C33/C226, C74/C84, C89/C95, C142/C215, C148/C198, C156/C166, C170/C179, and C180/C185. The N-linked (GlcNAc...) asparagine glycan is linked to N90. The N-linked (GlcNAc...) asparagine glycan is linked to N186.

It belongs to the thaumatin family. Mostly expressed in strobili, and, to a lower extent, in roots of seedlings and saplings.

Functionally, may be involved in disease resistance. This is Pathogenesis-related thaumatin-like protein 3.6 from Cryptomeria japonica (Japanese cedar).